Consider the following 160-residue polypeptide: Large ribosomal subunit protein bL17 (160 aa).

The span at 123–141 (DEKRQKRAEARAKRREEMQ) shows a compositional bias: basic and acidic residues. The segment at 123-160 (DEKRQKRAEARAKRREEMQKAMAEQQQAEGGEPEGGNE) is disordered. Residues 142–152 (KAMAEQQQAEG) show a composition bias toward low complexity.

The protein belongs to the bacterial ribosomal protein bL17 family. Part of the 50S ribosomal subunit. Contacts protein L32.

This chain is Large ribosomal subunit protein bL17, found in Acidobacterium capsulatum (strain ATCC 51196 / DSM 11244 / BCRC 80197 / JCM 7670 / NBRC 15755 / NCIMB 13165 / 161).